Here is a 186-residue protein sequence, read N- to C-terminus: Large ribosomal subunit protein uL22 (186 aa).

Residues 159-186 are disordered; the sequence is KATDEEPTKKKLSKKKLQRQKEKMMRSE. The segment covering 177–186 has biased composition (basic and acidic residues); it reads RQKEKMMRSE.

The protein belongs to the universal ribosomal protein uL22 family.

This Phlebotomus papatasi (Sandfly) protein is Large ribosomal subunit protein uL22 (RpL17).